Here is a 280-residue protein sequence, read N- to C-terminus: Mastin (280 aa).

The first 15 residues, 1-15, serve as a signal peptide directing secretion; the sequence is MLWLLVLTAPWLGGS. Positions 16-30 are excised as a propeptide; that stretch reads VPISPDPGLRHEQVG. The Peptidase S1 domain occupies 31–275; it reads IVGGCKVPAR…YVSWIHQHIP (245 aa). Cysteines 62 and 78 form a disulfide. His-77 acts as the Charge relay system in catalysis. Residues Asn-106 and Asn-117 are each glycosylated (N-linked (GlcNAc...) asparagine). The active-site Charge relay system is the Asp-127. 3 disulfides stabilise this stretch: Cys-161–Cys-234, Cys-194–Cys-215, and Cys-224–Cys-252. The active-site Charge relay system is the Ser-228.

It belongs to the peptidase S1 family. Oligomer; disulfide-linked. In terms of processing, N-glycosylated. Mononuclear cells within skin, intestine, trachea and lung parenchyma, and polymorphonuclear leukocytes within capillaries and blood.

The protein localises to the cytoplasm. With respect to regulation, inhibited by leupeptin and bis(5-amidino-2-benzimidazolyl)methane (BABIM). In terms of biological role, trypsin-like serine protease. Has a preference for extended substrates with basic residues at the P1 position; Arg is preferred over Lys. Active towards calcitonin gene-related peptide and gelatin. Not active towards substance P, vasoactive intestinal peptide, type I collagen or azocasein. The polypeptide is Mastin (Canis lupus familiaris (Dog)).